The following is a 119-amino-acid chain: MVKLAFPRELRLLTPSHFTFVFQQPQRAGTPQITILGRLNSLGHPRIGLTVAKKNVRRAHERNRIKRLTRESFRLRQHELPAMDFVVVAKKGVADLDNRALSEALEKLWRRHCRLARGS.

This sequence belongs to the RnpA family. In terms of assembly, consists of a catalytic RNA component (M1 or rnpB) and a protein subunit.

The catalysed reaction is Endonucleolytic cleavage of RNA, removing 5'-extranucleotides from tRNA precursor.. Its function is as follows. RNaseP catalyzes the removal of the 5'-leader sequence from pre-tRNA to produce the mature 5'-terminus. It can also cleave other RNA substrates such as 4.5S RNA. The protein component plays an auxiliary but essential role in vivo by binding to the 5'-leader sequence and broadening the substrate specificity of the ribozyme. This chain is Ribonuclease P protein component, found in Citrobacter koseri (strain ATCC BAA-895 / CDC 4225-83 / SGSC4696).